Consider the following 805-residue polypeptide: MYNHNLIEKKWAKIWNDQKIYSFQIDKNKPKYYILDMFPYPSGKGLHVGHVKAYMATDVISRWKNALGFNVLHPIGWDAFGLPAEQYAIQTNNHPAKFTQENINNFRTQLKRLGFNYDYRLEVDTTNKNYFKWTQWIFKKLYEHDLAYQADIEVNWCEQLGTVLANEEVLTDENGNKISERGSYPVIKKKMRQWVLKITAFADQLIDDLENLNWPNSIKAMQVNWINKSVGASIKFEIDQLDNQTIEVFSSRADTLFGASFLALSFDHPLVKQKLITDKNNAIEQFIKDNSIDQRVRYQGINTNYFAIHPITKKKIPIYLADYILSDYGTGAVMGVPAHDERDYQFAKQYDLEIIPVIKADQYPYLLDGEHINSEFNNGLNNEQAIQKTIAYLREHNLGDQKINYKLRDWIFSRQRYWGEPFPVLFDEEDNIYLLKDSELPVELPQLSDFSPNKDGLPPLANADDQWLHPIIDQKKYRREINTMPQWAGSCWYYLAYLLKLTDLNQADGDQNYLALNSEKAKELFDHFMPVDLYVGGQEHAVLHLLYARFWYKFLHHIKIVSSTEPFSQLINQGMILGEDNTKMSKSKGNIINPDDLVLSHGADTIRTYVMFMGPLNASLAWNSNALNGTRKFLERVYNLFDRVEINDSINQNLNYDYHNFLKKINKHLENFEFNLVVSEMMIFINACYKQTQVNKEMITNFLIVLSFFAPYLAEELNSKLNNPTLLYKMRLAQWDEAYLVKNTTTISCSINGKFKLVHEFDLDSDEQEVANYFLNQDLIKRNLENKKLVKTIFVKNKVINFIIK.

Positions 39 to 50 (PYPSGKGLHVGH) match the 'HIGH' region motif. Residues 583-587 (KMSKS) carry the 'KMSKS' region motif. K586 provides a ligand contact to ATP.

Belongs to the class-I aminoacyl-tRNA synthetase family.

The protein resides in the cytoplasm. The catalysed reaction is tRNA(Leu) + L-leucine + ATP = L-leucyl-tRNA(Leu) + AMP + diphosphate. The protein is Leucine--tRNA ligase of Mycoplasmoides gallisepticum (strain R(low / passage 15 / clone 2)) (Mycoplasma gallisepticum).